The following is a 316-amino-acid chain: MTLRARHLLGIEHLAPDEIVTLLDLADRYADLNRRPDKHGDALDGLTQINMFFENSTRTQASFEIAGKRLGADVMNMEVRASSIKKGETLIDTAMTLNAMHPDLLVVRHPHSGAVNLLAEKVNCAVLNAGDGRHEHPTQALLDALTIRRAKGKLHRLNVAICGDIAHSRVARSNILLLGKMENRIRLVGPRTLMPAEIAELGVEVYEDMKAGLDGVDVVMMLRLQKERMDGGFIPSEREYYHRYGLDAEKLAYAKPDAIVMHPGPMNRGVEIDGTLADDINRSVIQEQVEMGVAVRMAAMDLLARNLRAAREGVRA.

Carbamoyl phosphate contacts are provided by arginine 58 and threonine 59. Lysine 86 provides a ligand contact to L-aspartate. Positions 108, 136, and 139 each coordinate carbamoyl phosphate. L-aspartate-binding residues include arginine 169 and arginine 223. Glycine 264 and proline 265 together coordinate carbamoyl phosphate.

It belongs to the aspartate/ornithine carbamoyltransferase superfamily. ATCase family. Heterododecamer (2C3:3R2) of six catalytic PyrB chains organized as two trimers (C3), and six regulatory PyrI chains organized as three dimers (R2).

The catalysed reaction is carbamoyl phosphate + L-aspartate = N-carbamoyl-L-aspartate + phosphate + H(+). Its pathway is pyrimidine metabolism; UMP biosynthesis via de novo pathway; (S)-dihydroorotate from bicarbonate: step 2/3. In terms of biological role, catalyzes the condensation of carbamoyl phosphate and aspartate to form carbamoyl aspartate and inorganic phosphate, the committed step in the de novo pyrimidine nucleotide biosynthesis pathway. The protein is Aspartate carbamoyltransferase catalytic subunit of Dinoroseobacter shibae (strain DSM 16493 / NCIMB 14021 / DFL 12).